The sequence spans 158 residues: Endoribonuclease YbeY (158 aa).

Positions 122, 126, and 132 each coordinate Zn(2+).

The protein belongs to the endoribonuclease YbeY family. Requires Zn(2+) as cofactor.

It is found in the cytoplasm. In terms of biological role, single strand-specific metallo-endoribonuclease involved in late-stage 70S ribosome quality control and in maturation of the 3' terminus of the 16S rRNA. The polypeptide is Endoribonuclease YbeY (Bacillus licheniformis (strain ATCC 14580 / DSM 13 / JCM 2505 / CCUG 7422 / NBRC 12200 / NCIMB 9375 / NCTC 10341 / NRRL NRS-1264 / Gibson 46)).